The following is a 212-amino-acid chain: Stem bromelain (212 aa).

2 cysteine pairs are disulfide-bonded: cysteine 23–cysteine 63 and cysteine 57–cysteine 96. The active site involves cysteine 26. Asparagine 117 is a glycosylation site (N-linked (GlcNAc...) asparagine). Cysteine 152 and cysteine 199 are disulfide-bonded. Histidine 158 is an active-site residue.

Belongs to the peptidase C1 family.

It carries out the reaction Broad specificity for cleavage of proteins, but strong preference for Z-Arg-Arg-|-NHMec among small molecule substrates.. Its function is as follows. Cysteine proteinase with a high level of diversity in substrate specificity. In Ananas comosus (Pineapple), this protein is Stem bromelain.